The primary structure comprises 356 residues: MTKSYSESGLMGEPQPQGPPSWTDECLSSQDEEHEADKKEDDLETMNAEEDSLRNGGEEEDEDEDLEEEEEEEEEDDDQKPKRRGPKKKKMTKARLERFKLRRMKANARERNRMHGLNAALDNLRKVVPCYSKTQKLSKIETLRLAKNYIWALSEILRSGKSPDLVSFVQTLCKGLSQPTTNLVAGCLQLNPRTFLPEQNQDMPPHLPTASASFPVHPYSYQSPGLPSPPYGTMDSSHVFHVKPPPHAYSAALEPFFESPLTDCTSPSFDGPLSPPLSINGNFSFKHEPSAEFEKNYAFTMHYPAATLAGAQSHGSIFSGTAAPRCEIPIDNIMSFDSHSHHERVMSAQLNAIFHD.

Residues 1–94 are disordered; that stretch reads MTKSYSESGL…GPKKKKMTKA (94 aa). Residues 58–78 are compositionally biased toward acidic residues; that stretch reads EEEDEDEDLEEEEEEEEEDDD. Positions 81-93 are enriched in basic residues; the sequence is PKRRGPKKKKMTK. A Nuclear localization signal motif is present at residues 87-93; the sequence is KKKKMTK. One can recognise a bHLH domain in the interval 101 to 153; the sequence is LRRMKANARERNRMHGLNAALDNLRKVVPCYSKTQKLSKIETLRLAKNYIWAL. Ser-162, Ser-259, Ser-266, and Ser-274 each carry phosphoserine. Ser-335 is modified (phosphoserine; by CaMK2).

As to quaternary structure, efficient DNA-binding requires dimerization with another bHLH protein. Heterodimer with TCF3/E47; the heterodimer is inhibited in presence of ID2, but not NR0B2, to E-box element. Interacts with EP300; the interaction is inhibited by NR0B2. Interacts with RREB1. Interacts with ATOH8. Phosphorylated. In islet cells, phosphorylated on Ser-274 upon glucose stimulation; which may be required for nuclear localization. In activated neurons, phosphorylated on Ser-335; which promotes dendritic growth. Phosphorylated by MAPK1; phosphorylation regulates heterodimerization and DNA-binding activities. Phosphorylation on Ser-266 and Ser-274 increases transactivation on the insulin promoter in glucose-stimulated insulinoma cells.

Its subcellular location is the cytoplasm. The protein localises to the nucleus. Functionally, acts as a transcriptional activator: mediates transcriptional activation by binding to E box-containing promoter consensus core sequences 5'-CANNTG-3'. Associates with the p300/CBP transcription coactivator complex to stimulate transcription of the secretin gene as well as the gene encoding the cyclin-dependent kinase inhibitor CDKN1A. Contributes to the regulation of several cell differentiation pathways, like those that promote the formation of early retinal ganglion cells, inner ear sensory neurons, granule cells forming either the cerebellum or the dentate gyrus cell layer of the hippocampus, endocrine islet cells of the pancreas and enteroendocrine cells of the small intestine. Together with PAX6 or SIX3, is required for the regulation of amacrine cell fate specification. Also required for dendrite morphogenesis and maintenance in the cerebellar cortex. Associates with chromatin to enhancer regulatory elements in genes encoding key transcriptional regulators of neurogenesis. This chain is Neurogenic differentiation factor 1 (NEUROD1), found in Homo sapiens (Human).